Here is a 358-residue protein sequence, read N- to C-terminus: Trace amine-associated receptor 7c (358 aa).

The Extracellular portion of the chain corresponds to 1–47 (MATDDDSFPWDQDSILSRDLLSASSLQLCYENLNRSCVRSPYSPGSR). The N-linked (GlcNAc...) asparagine glycan is linked to N34. Intrachain disulfides connect C37-C201 and C120-C205. A helical membrane pass occupies residues 48-68 (LILYAVFGFGAVLAVCGNLLV). At 69 to 83 (MTSILHFRQLHSPAN) the chain is on the cytoplasmic side. The chain crosses the membrane as a helical span at residues 84-104 (FLVASLACADLLVGLTVMPFS). Residues 105–125 (MVRSVEGCWYFGNTYCKFHSC) lie on the Extracellular side of the membrane. The helical transmembrane segment at 126–148 (FEGSFCYSSLFHLCFISLDRYIA) threads the bilayer. The Cytoplasmic portion of the chain corresponds to 149–166 (VSDPLIYPTRFTASISGK). The helical transmembrane segment at 167 to 187 (CITFSWLLSIIYSFSLLYTGA) threads the bilayer. Residues 188–211 (NEAGLEDLVSALTCVGGCQVAVNQ) lie on the Extracellular side of the membrane. The chain crosses the membrane as a helical span at residues 212–232 (SWVFINFLLFLVPALVMMTVY). The Cytoplasmic portion of the chain corresponds to 233 to 274 (SKIFLIAKQQAQNIEKMSKQTARASESYKDRVAKRERKAAKT). The chain crosses the membrane as a helical span at residues 275–295 (LGIAVAAFLLSWLPYFIDSII). The Extracellular portion of the chain corresponds to 296-309 (DAFLGFITPTYMYE). Residues 310–332 (ILVWIVYYNSAMNPLIYAFFYPW) form a helical membrane-spanning segment. Residues 333–358 (FRKAIKLIVTGKILRENSSTINLFPE) are Cytoplasmic-facing.

It belongs to the G-protein coupled receptor 1 family.

The protein resides in the cell membrane. In terms of biological role, olfactory receptor specific for N,N-dimethylalkylamines trace amines. Trace amine compounds are enriched in animal body fluids and act on trace amine-associated receptors (TAARs) to elicit both intraspecific and interspecific innate behaviors. Ligand-binding causes a conformation change that triggers signaling via G(s)-class of G alpha proteins (GNAL or GNAS). The protein is Trace amine-associated receptor 7c of Rattus norvegicus (Rat).